Consider the following 71-residue polypeptide: cAMP-dependent protein kinase inhibitor beta (71 aa).

The disordered stretch occupies residues 1–21 (MTDVESVISSFASSARAGRRN). Threonine 2 is modified (blocked amino end (Thr)). Position 35 is a phosphoserine (serine 35). The interval 51-71 (AKMKNEEKDQGQPKKPLDEDK) is disordered.

The protein belongs to the PKI family. Testis.

Extremely potent competitive inhibitor of cAMP-dependent protein kinase activity, this protein interacts with the catalytic subunit of the enzyme after the cAMP-induced dissociation of its regulatory chains. The sequence is that of cAMP-dependent protein kinase inhibitor beta (Pkib) from Rattus norvegicus (Rat).